Reading from the N-terminus, the 203-residue chain is Small ribosomal subunit protein uS4 (203 aa).

The S4 RNA-binding domain maps to 93-154 (RRFDNVVFRA…KSKNMDAVTE (62 aa)).

It belongs to the universal ribosomal protein uS4 family. As to quaternary structure, part of the 30S ribosomal subunit. Contacts protein S5. The interaction surface between S4 and S5 is involved in control of translational fidelity.

Functionally, one of the primary rRNA binding proteins, it binds directly to 16S rRNA where it nucleates assembly of the body of the 30S subunit. Its function is as follows. With S5 and S12 plays an important role in translational accuracy. In Prosthecochloris aestuarii (strain DSM 271 / SK 413), this protein is Small ribosomal subunit protein uS4.